The chain runs to 333 residues: Adenosine deaminase (333 aa).

Zn(2+)-binding residues include histidine 12 and histidine 14. Substrate contacts are provided by histidine 14, aspartate 16, and glycine 170. Histidine 197 contributes to the Zn(2+) binding site. Glutamate 200 (proton donor) is an active-site residue. Aspartate 278 is a Zn(2+) binding site. Aspartate 279 lines the substrate pocket.

It belongs to the metallo-dependent hydrolases superfamily. Adenosine and AMP deaminases family. Adenosine deaminase subfamily. The cofactor is Zn(2+).

It carries out the reaction adenosine + H2O + H(+) = inosine + NH4(+). It catalyses the reaction 2'-deoxyadenosine + H2O + H(+) = 2'-deoxyinosine + NH4(+). Catalyzes the hydrolytic deamination of adenosine and 2-deoxyadenosine. The chain is Adenosine deaminase from Proteus mirabilis (strain HI4320).